The primary structure comprises 538 residues: Chaperonin GroEL (538 aa).

ATP contacts are provided by residues 29–32 (TLGP), 86–90 (DGTTT), glycine 413, 477–479 (NAA), and aspartate 493.

This sequence belongs to the chaperonin (HSP60) family. In terms of assembly, forms a cylinder of 14 subunits composed of two heptameric rings stacked back-to-back. Interacts with the co-chaperonin GroES.

The protein resides in the cytoplasm. It carries out the reaction ATP + H2O + a folded polypeptide = ADP + phosphate + an unfolded polypeptide.. Functionally, together with its co-chaperonin GroES, plays an essential role in assisting protein folding. The GroEL-GroES system forms a nano-cage that allows encapsulation of the non-native substrate proteins and provides a physical environment optimized to promote and accelerate protein folding. The chain is Chaperonin GroEL from Bifidobacterium adolescentis (strain ATCC 15703 / DSM 20083 / NCTC 11814 / E194a).